Consider the following 692-residue polypeptide: Furin-like protease kpc-1 (692 aa).

The signal sequence occupies residues Met1–Ala33. The N-linked (GlcNAc...) asparagine glycan is linked to Asn3. The propeptide occupies His34 to Arg139. The Lumenal segment spans residues Gly140–Ser670. The disordered stretch occupies residues Asp152–Pro177. Residue Asp176 participates in Ca(2+) binding. The region spanning Met182–Val503 is the Peptidase S8 domain. Asp221 (charge relay system) is an active-site residue. Substrate is bound at residue Asp222. Asp230, Asp242, Asp247, and Asp249 together coordinate Ca(2+). Positions Asp230–Asp249 are disordered. Glu259–Asn260 serves as a coordination point for substrate. His262 (charge relay system) is an active-site residue. Ile273 provides a ligand contact to Ca(2+). Asn275 is a glycosylation site (N-linked (GlcNAc...) asparagine). Residues Asn276, Leu278, and Ile280 each coordinate Ca(2+). 2 disulfide bridges follow: Cys279–Cys428 and Cys371–Cys401. Residues Glu304, Ser321–Asp326, Asp332, and Ala360–Asn363 each bind substrate. Asp326 is a binding site for Ca(2+). Residue Asp369 participates in Ca(2+) binding. Residues Asp374 and Tyr376 each coordinate substrate. Position 399 (Glu399) interacts with Ca(2+). Ser436 serves as the catalytic Charge relay system. Substrate is bound at residue Ser436. Residues Asn455 and Asn487 are each glycosylated (N-linked (GlcNAc...) asparagine). The region spanning Val512 to Glu646 is the P/Homo B domain. Cysteines 518 and 544 form a disulfide. Positions Arg570 to Asp572 match the Cell attachment site motif. A helical membrane pass occupies residues Gly671 to Tyr692.

This sequence belongs to the peptidase S8 family. Furin subfamily. As to quaternary structure, interacts (via extracellular domain) with receptor dma-1 (via extracellular domain); the interaction promotes dma-1 internalization. Requires Ca(2+) as cofactor. As to expression, expressed in the nervous system including the ventral nerve cord, the nerve ring and the retrovesicular ganglion, and in epithelial cells. Expressed in IL2 neurons. Expressed in PVD mechanosensory neurons. Expressed in pharynx with strong expression in the g2 pharyngeal gland cells and vpi pharyngeal intestinal valve cells. Expressed in intestine.

Its subcellular location is the cell membrane. It is found in the perikaryon. The protein localises to the cell projection. It localises to the axon. Functionally, furin-like protease which cleaves proproteins at the RX(K/R)R consensus motif. During neuronal development, regulates the formation and extension of dendrite branches and cellular positioning of various type of neurons. Together with chin-1 and cdc-42, plays a role in the development of the neuropil and is required for the guidance of axons from neurons, including SubL pioneer neurons and AIY interneurons, into the nerve ring. Its role in axon guidance in glia and pioneer neurons may be through ensuring the fmi-1 protein is correctly localized to the nerve ring. Promotes the formation, extension and self-avoidance of dendritic branches of PVD and FLP mechanosensory neurons. In PVD neurons, regulates plasma membrane levels of branching receptor dma-1 by targeting it to late endosomes and thus promotes normal dendrite branching and dendrite self-avoidance. Also controls dendrite extension in AIY and D-type motoneurons, dendrite branching in AQR sensory neurons and VC4/5 motoneurons, the normal number of dendritic branches in AVL neurons and the positioning of HSN and ALM/PLM neurons. Dispensable for maintaining dendrite branching in adults. Also regulates dauer-specific dendritic branching of IL2 neurons and dauer-specific nictation behavior. Under adverse environmental conditions, may promote dauer formation by processing insulin-like proteins ins-1 and ins-18, two daf-2/InsR antagonists. The polypeptide is Furin-like protease kpc-1 (Caenorhabditis elegans).